The following is a 217-amino-acid chain: Somatotropin (217 aa).

An N-terminal signal peptide occupies residues methionine 1–glycine 26. A Zn(2+)-binding site is contributed by histidine 46. A disulfide bridge connects residues cysteine 79 and cysteine 190. Serine 132 carries the phosphoserine modification. Position 199 (glutamate 199) interacts with Zn(2+). An intrachain disulfide couples cysteine 207 to cysteine 215.

It belongs to the somatotropin/prolactin family.

It localises to the secreted. Functionally, plays an important role in growth control. Its major role in stimulating body growth is to stimulate the liver and other tissues to secrete IGF1. It stimulates both the differentiation and proliferation of myoblasts. It also stimulates amino acid uptake and protein synthesis in muscle and other tissues. In Bos mutus grunniens (Wild yak), this protein is Somatotropin (GH1).